Consider the following 501-residue polypeptide: Dipeptide and tripeptide permease A (501 aa).

Topologically, residues 1–21 (MSTANKKPTESVSLNAFKQPK) are cytoplasmic. The helical transmembrane segment at 22 to 44 (AFYLIFSIELWERFGYYGLQGIM) threads the bilayer. The Periplasmic segment spans residues 45–59 (AVYLVKQLGMSEADS). Residues 60 to 80 (ITLFSSFSALVYGLVAIGGWL) form a helical membrane-spanning segment. Residues 81–89 (GDKILGTKR) lie on the Cytoplasmic side of the membrane. A helical transmembrane segment spans residues 90 to 110 (VIMLGAVVLAIGYALVAWSGH). Residue Asp-111 is a topological domain, periplasmic. The helical transmembrane segment at 112–132 (AGIVYMGMAAIAVGNGLFKAN) threads the bilayer. The Cytoplasmic portion of the chain corresponds to 133-153 (PSSLLSTCYAKDDPRLDGAFT). The chain crosses the membrane as a helical span at residues 154–174 (MYYMSVNIGSFFSMLATPWLA). At 175-178 (ARYG) the chain is on the periplasmic side. The helical transmembrane segment at 179–199 (WSTAFALSVVGMLITVVNFAF) threads the bilayer. Residues 200–219 (CQRWVKSYGSKPDFEPINFR) are Cytoplasmic-facing. Residues 220–240 (NLLLTIVGIVVLIAVATWLLH) form a helical membrane-spanning segment. Residues 241-246 (NQDIAR) are Periplasmic-facing. The chain crosses the membrane as a helical span at residues 247-267 (MVLGVIALGIVIIFGKEAFSM). Residues 268 to 274 (HGAARRK) lie on the Cytoplasmic side of the membrane. The chain crosses the membrane as a helical span at residues 275–295 (MIVAFILMLQAIIFFVLYSQM). Residues 296–320 (PTSLNFFAIRNVEHSILGIAFEPEQ) are Periplasmic-facing. Residues 321-341 (YQALNPFWIITGSPILAAIYN) form a helical membrane-spanning segment. The Cytoplasmic segment spans residues 342–352 (RMGDTLPMPMK). A helical transmembrane segment spans residues 353–373 (FAIGMVLCSGAFLILPLGAKF). Residues 374 to 383 (ANDAGIVSVN) are Periplasmic-facing. The chain crosses the membrane as a helical span at residues 384–404 (WLIASYGLQSIGELMISGLGL). Over 405–414 (AMVAQLVPQR) the chain is Cytoplasmic. Residues 415–435 (LMGFIMGSWFLTTAGANIIGG) form a helical membrane-spanning segment. At 436–459 (YVANLMAVPSDVTDPLMSLEVYGR) the chain is on the periplasmic side. Residues 460–480 (VFMQIGIATAVIAVLMLLTAP) traverse the membrane as a helical segment. Residues 481 to 501 (KLNRMTQDDDTAEKGSKAATV) lie on the Cytoplasmic side of the membrane.

Belongs to the major facilitator superfamily. Proton-dependent oligopeptide transporter (POT/PTR) (TC 2.A.17) family. DtpA subfamily.

It localises to the cell inner membrane. Proton-dependent permease that transports di- and tripeptides. This chain is Dipeptide and tripeptide permease A, found in Salmonella typhi.